The chain runs to 269 residues: Formamidopyrimidine-DNA glycosylase (269 aa).

Proline 2 serves as the catalytic Schiff-base intermediate with DNA. Glutamate 3 (proton donor) is an active-site residue. Lysine 57 serves as the catalytic Proton donor; for beta-elimination activity. The DNA site is built by histidine 90, arginine 109, and arginine 150. The FPG-type zinc-finger motif lies at 235–269 (NVYGRKGEPCEACGKAIESKVIGQRNTFFCTRCQR). The active-site Proton donor; for delta-elimination activity is arginine 259.

Belongs to the FPG family. Monomer. Zn(2+) is required as a cofactor.

The catalysed reaction is Hydrolysis of DNA containing ring-opened 7-methylguanine residues, releasing 2,6-diamino-4-hydroxy-5-(N-methyl)formamidopyrimidine.. The enzyme catalyses 2'-deoxyribonucleotide-(2'-deoxyribose 5'-phosphate)-2'-deoxyribonucleotide-DNA = a 3'-end 2'-deoxyribonucleotide-(2,3-dehydro-2,3-deoxyribose 5'-phosphate)-DNA + a 5'-end 5'-phospho-2'-deoxyribonucleoside-DNA + H(+). In terms of biological role, involved in base excision repair of DNA damaged by oxidation or by mutagenic agents. Acts as a DNA glycosylase that recognizes and removes damaged bases. Has a preference for oxidized purines, such as 7,8-dihydro-8-oxoguanine (8-oxoG). Has AP (apurinic/apyrimidinic) lyase activity and introduces nicks in the DNA strand. Cleaves the DNA backbone by beta-delta elimination to generate a single-strand break at the site of the removed base with both 3'- and 5'-phosphates. The protein is Formamidopyrimidine-DNA glycosylase of Alteromonas mediterranea (strain DSM 17117 / CIP 110805 / LMG 28347 / Deep ecotype).